The following is a 274-amino-acid chain: 3-methyl-2-oxobutanoate hydroxymethyltransferase (274 aa).

Mg(2+) contacts are provided by D49 and D88. 3-methyl-2-oxobutanoate is bound by residues D49–S50, D88, and K118. A Mg(2+)-binding site is contributed by E120. Residue E187 is the Proton acceptor of the active site.

The protein belongs to the PanB family. In terms of assembly, homodecamer; pentamer of dimers. Mg(2+) is required as a cofactor.

It localises to the cytoplasm. The catalysed reaction is 3-methyl-2-oxobutanoate + (6R)-5,10-methylene-5,6,7,8-tetrahydrofolate + H2O = 2-dehydropantoate + (6S)-5,6,7,8-tetrahydrofolate. It functions in the pathway cofactor biosynthesis; (R)-pantothenate biosynthesis; (R)-pantoate from 3-methyl-2-oxobutanoate: step 1/2. In terms of biological role, catalyzes the reversible reaction in which hydroxymethyl group from 5,10-methylenetetrahydrofolate is transferred onto alpha-ketoisovalerate to form ketopantoate. This Rhodopseudomonas palustris (strain HaA2) protein is 3-methyl-2-oxobutanoate hydroxymethyltransferase.